The chain runs to 216 residues: Imidazoleglycerol-phosphate dehydratase (216 aa).

Ser-211 bears the Phosphoserine mark.

The protein belongs to the imidazoleglycerol-phosphate dehydratase family.

The catalysed reaction is D-erythro-1-(imidazol-4-yl)glycerol 3-phosphate = 3-(imidazol-4-yl)-2-oxopropyl phosphate + H2O. The protein operates within amino-acid biosynthesis; L-histidine biosynthesis; L-histidine from 5-phospho-alpha-D-ribose 1-diphosphate: step 6/9. The protein is Imidazoleglycerol-phosphate dehydratase (his5) of Schizosaccharomyces pombe (strain 972 / ATCC 24843) (Fission yeast).